We begin with the raw amino-acid sequence, 136 residues long: Congerin-2 (136 aa).

An N-acetylserine modification is found at Ser2. In terms of domain architecture, Galectin spans 4–136; it reads RAEVRNIPFK…DARLTFVRLE (133 aa). 70 to 76 contacts a beta-D-galactoside; the sequence is WQQEERS.

In terms of assembly, homodimer.

Functionally, this protein binds beta-galactoside. Its physiological function is not yet known. This is Congerin-2 from Conger myriaster (Conger eel).